The chain runs to 354 residues: UDP-N-acetylglucosamine--N-acetylmuramyl-(pentapeptide) pyrophosphoryl-undecaprenol N-acetylglucosamine transferase (354 aa).

Residues 11–13 (TGG), Asn117, Arg160, Ser186, and Gln288 each bind UDP-N-acetyl-alpha-D-glucosamine.

The protein belongs to the glycosyltransferase 28 family. MurG subfamily.

The protein resides in the cell inner membrane. It catalyses the reaction di-trans,octa-cis-undecaprenyl diphospho-N-acetyl-alpha-D-muramoyl-L-alanyl-D-glutamyl-meso-2,6-diaminopimeloyl-D-alanyl-D-alanine + UDP-N-acetyl-alpha-D-glucosamine = di-trans,octa-cis-undecaprenyl diphospho-[N-acetyl-alpha-D-glucosaminyl-(1-&gt;4)]-N-acetyl-alpha-D-muramoyl-L-alanyl-D-glutamyl-meso-2,6-diaminopimeloyl-D-alanyl-D-alanine + UDP + H(+). The protein operates within cell wall biogenesis; peptidoglycan biosynthesis. Its function is as follows. Cell wall formation. Catalyzes the transfer of a GlcNAc subunit on undecaprenyl-pyrophosphoryl-MurNAc-pentapeptide (lipid intermediate I) to form undecaprenyl-pyrophosphoryl-MurNAc-(pentapeptide)GlcNAc (lipid intermediate II). The polypeptide is UDP-N-acetylglucosamine--N-acetylmuramyl-(pentapeptide) pyrophosphoryl-undecaprenol N-acetylglucosamine transferase (Rickettsia canadensis (strain McKiel)).